A 68-amino-acid polypeptide reads, in one-letter code: Sperm-associated antigen 11A (68 aa).

Residues 1-19 (MKVLLLFAVFFCLVQRNSG) form the signal peptide. Intrachain disulfides connect C30/C59, C37/C52, and C42/C60.

It belongs to the beta-defensin family. In terms of tissue distribution, only expressed in epididymis (middle part of the caput).

The protein localises to the secreted. Has antimicrobial activity against E.coli. Plays a role in the defense response in the male reproductive tract, contributing to sperm maturation, storage and protection. The protein is Sperm-associated antigen 11A of Rattus norvegicus (Rat).